Reading from the N-terminus, the 247-residue chain is DNA polymerase sliding clamp (247 aa).

This sequence belongs to the PCNA family. As to quaternary structure, homotrimer. The subunits circularize to form a toroid; DNA passes through its center. Replication factor C (RFC) is required to load the toroid on the DNA.

In terms of biological role, sliding clamp subunit that acts as a moving platform for DNA processing. Responsible for tethering the catalytic subunit of DNA polymerase and other proteins to DNA during high-speed replication. The chain is DNA polymerase sliding clamp from Methanosphaerula palustris (strain ATCC BAA-1556 / DSM 19958 / E1-9c).